A 223-amino-acid chain; its full sequence is Probable chemoreceptor glutamine deamidase CheD (223 aa).

Positions 189–223 (QTASAKAHTPPQIERFSAPAKPRFERFTRPSTATS) are disordered.

This sequence belongs to the CheD family.

It catalyses the reaction L-glutaminyl-[protein] + H2O = L-glutamyl-[protein] + NH4(+). Probably deamidates glutamine residues to glutamate on methyl-accepting chemotaxis receptors (MCPs), playing an important role in chemotaxis. This Bordetella petrii (strain ATCC BAA-461 / DSM 12804 / CCUG 43448) protein is Probable chemoreceptor glutamine deamidase CheD.